The primary structure comprises 308 residues: Uricase (308 aa).

Active-site charge relay system residues include K5 and T65. Urate contacts are provided by T65, D66, F177, R194, I242, Q243, and N269. The tract at residues A283–Q308 is disordered.

It belongs to the uricase family.

The catalysed reaction is urate + O2 + H2O = 5-hydroxyisourate + H2O2. The protein operates within purine metabolism; urate degradation; (S)-allantoin from urate: step 1/3. Functionally, catalyzes the oxidation of uric acid to 5-hydroxyisourate, which is further processed to form (S)-allantoin. In Haloferax volcanii (strain ATCC 29605 / DSM 3757 / JCM 8879 / NBRC 14742 / NCIMB 2012 / VKM B-1768 / DS2) (Halobacterium volcanii), this protein is Uricase.